Consider the following 643-residue polypeptide: Uromodulin (643 aa).

Positions 1 to 26 (MKCLFSPNFMWMAAVVTSWVIIPAAT) are cleaved as a signal peptide. The region spanning 32–66 (KSCSECHSNATCTVDGAATTCACQEGFTGDGLECV) is the EGF-like 1 domain. 21 disulfides stabilise this stretch: Cys-34–Cys-43, Cys-37–Cys-52, Cys-54–Cys-65, Cys-71–Cys-85, Cys-79–Cys-94, Cys-96–Cys-108, Cys-114–Cys-128, Cys-122–Cys-137, Cys-139–Cys-150, Cys-152–Cys-163, Cys-157–Cys-172, Cys-176–Cys-269, Cys-197–Cys-284, Cys-219–Cys-257, Cys-225–Cys-289, Cys-250–Cys-258, Cys-299–Cys-308, Cys-302–Cys-317, Cys-319–Cys-349, Cys-337–Cys-427, and Cys-368–Cys-391. Asn-40 is a glycosylation site (N-linked (GlcNAc...) asparagine). One can recognise an EGF-like 2; calcium-binding domain in the interval 67 to 109 (DLDECAVLGAHNCSATKSCVNTLGSYTCVCPEGFLLSSELGCE). An N-linked (GlcNAc...) asparagine glycan is attached at Asn-78. In terms of domain architecture, EGF-like 3; calcium-binding spans 110 to 151 (DVDECAEPGLSRCHALATCINGEGNYSCVCPAGYLGDGRHCE). Asn-134 carries an N-linked (GlcNAc...) asparagine glycan. The segment at 152 to 173 (CSPGSCGPGLDCVREGDALVCV) is beta hairpin. Residues 174 to 293 (DPCQVHRILD…CHLAYCTDPS (120 aa)) are D10C. N-linked (GlcNAc...) asparagine glycosylation is present at Asn-234. N-linked (GlcNAc...) asparagine glycosylation is present at Asn-277. Residues 294–325 (SVEGTCEECRVDEDCKSDNGEWHCQCKQDFNV) form the EGF-like 4 domain. Asn-324 is a glycosylation site (N-linked (GlcNAc...) asparagine). Residues 336-431 (ECGVDDIKLS…RINFACSYPL (96 aa)) are ZP-N. Residues 336–587 (ECGVDDIKLS…EKCRPTCPET (252 aa)) form the ZP domain. N-linked (GlcNAc...) asparagine glycans are attached at residues Asn-398 and Asn-449. The interval 432–455 (DMKVSLKTSLQPMVSALNISMGGT) is flexible ZP-N/ZP-C linker; important for secretion and polymerization into filaments. Residues 456–466 (GTFTVRMALFQ) form an internal hydrophobic patch (IHP) region. The ZP-C stretch occupies residues 456–587 (GTFTVRMALF…EKCRPTCPET (132 aa)). 3 disulfides stabilise this stretch: Cys-508–Cys-568, Cys-529–Cys-584, and Cys-573–Cys-580. Asn-515 carries N-linked (GlcNAc...) asparagine glycosylation. The segment at 588 to 591 (RFRS) is essential for cleavage by HPN. The external hydrophobic patch (EHP); regulates polymerization into filaments stretch occupies residues 600–608 (VLNLGPITR). The GPI-anchor amidated serine moiety is linked to residue Ser-621. A propeptide spans 622–643 (SLGLLQVWLPLLLSATLTLMSP) (removed in mature form).

Homodimer that then polymerizes into long filaments. The filaments can additionally assemble laterally to form a sheet. The filaments consist of a zigzag-shaped backbone with laterally protruding arms which interact with bacterial adhesin fimH. Two fimH molecules can bind to a single UMOD monomer. N-glycosylated. In terms of processing, proteolytically cleaved at a conserved C-terminal proteolytic cleavage site to generate the secreted form found in urine. This cleavage is catalyzed by HPN.

The protein resides in the apical cell membrane. Its subcellular location is the basolateral cell membrane. The protein localises to the cell projection. It is found in the cilium membrane. It localises to the secreted. Functionally, functions in biogenesis and organization of the apical membrane of epithelial cells of the thick ascending limb of Henle's loop (TALH), where it promotes formation of complex filamentous gel-like structure that may play a role in the water barrier permeability. May serve as a receptor for binding and endocytosis of cytokines (IL-1, IL-2) and TNF. Facilitates neutrophil migration across renal epithelia. In terms of biological role, in the urine, may contribute to colloid osmotic pressure, retards passage of positively charged electrolytes, and inhibits formation of liquid containing supersaturated salts and subsequent formation of salt crystals. Protects against urinary tract infections by binding to type 1 fimbriated E.coli. Binds to bacterial adhesin fimH which mediates the stable formation of bacterial aggregates, prevents the binding of E.coli to uroplakins UPK1A and UPK1B which act as urothelial receptors for type I fimbriae, and allows for pathogen clearance through micturation. Also promotes aggregation of other bacteria including K.pneumoniae, P.aeruginosa and S.mitis and so may also protect against other uropathogens. In Bos taurus (Bovine), this protein is Uromodulin (UMOD).